The chain runs to 413 residues: Serine hydroxymethyltransferase (413 aa).

Residues leucine 117 and 121-123 (GHL) each bind (6S)-5,6,7,8-tetrahydrofolate. Lysine 226 carries the N6-(pyridoxal phosphate)lysine modification. 349–351 (SPF) contributes to the (6S)-5,6,7,8-tetrahydrofolate binding site.

The protein belongs to the SHMT family. As to quaternary structure, homodimer. Pyridoxal 5'-phosphate is required as a cofactor.

The protein localises to the cytoplasm. It catalyses the reaction (6R)-5,10-methylene-5,6,7,8-tetrahydrofolate + glycine + H2O = (6S)-5,6,7,8-tetrahydrofolate + L-serine. It participates in one-carbon metabolism; tetrahydrofolate interconversion. Its pathway is amino-acid biosynthesis; glycine biosynthesis; glycine from L-serine: step 1/1. Catalyzes the reversible interconversion of serine and glycine with tetrahydrofolate (THF) serving as the one-carbon carrier. This reaction serves as the major source of one-carbon groups required for the biosynthesis of purines, thymidylate, methionine, and other important biomolecules. Also exhibits THF-independent aldolase activity toward beta-hydroxyamino acids, producing glycine and aldehydes, via a retro-aldol mechanism. The chain is Serine hydroxymethyltransferase from Listeria monocytogenes serovar 1/2a (strain ATCC BAA-679 / EGD-e).